Consider the following 258-residue polypeptide: Malonyl-[acyl-carrier protein] O-methyltransferase (258 aa).

It belongs to the methyltransferase superfamily.

The enzyme catalyses malonyl-[ACP] + S-adenosyl-L-methionine = malonyl-[ACP] methyl ester + S-adenosyl-L-homocysteine. The protein operates within cofactor biosynthesis; biotin biosynthesis. Its function is as follows. Converts the free carboxyl group of a malonyl-thioester to its methyl ester by transfer of a methyl group from S-adenosyl-L-methionine (SAM). It allows to synthesize pimeloyl-ACP via the fatty acid synthetic pathway. The chain is Malonyl-[acyl-carrier protein] O-methyltransferase from Hamiltonella defensa subsp. Acyrthosiphon pisum (strain 5AT).